Reading from the N-terminus, the 800-residue chain is Aldehyde dehydrogenase family 16 member A1 (800 aa).

This sequence belongs to the aldehyde dehydrogenase family. In terms of assembly, interacts with SPG21.

In Bos taurus (Bovine), this protein is Aldehyde dehydrogenase family 16 member A1 (ALDH16A1).